Consider the following 623-residue polypeptide: Low affinity potassium transport system protein Kup (623 aa).

Transmembrane regions (helical) follow at residues 10–30, 47–67, 102–122, 138–158, 166–186, 214–234, 248–268, 277–297, 338–358, 364–384, 396–416, and 420–440; these read LSAV…TSPL, PDVV…IVSV, ILVI…VITP, PALD…LFVI, VGKL…LLGL, VSFF…ALYA, WFTV…ALLL, PFFL…ATLA, IYIP…IVGF, LAAA…VLFC, FFVY…FSAN, and LFSG…IMTT.

It belongs to the HAK/KUP transporter (TC 2.A.72) family.

Its subcellular location is the cell inner membrane. It catalyses the reaction K(+)(in) + H(+)(in) = K(+)(out) + H(+)(out). Responsible for the low-affinity transport of potassium into the cell. Likely operates as a K(+):H(+) symporter. The polypeptide is Low affinity potassium transport system protein Kup (Yersinia enterocolitica serotype O:8 / biotype 1B (strain NCTC 13174 / 8081)).